Reading from the N-terminus, the 207-residue chain is Proteasome subunit beta 2 (207 aa).

Positions 1-13 (METNNKLKILKTG) are cleaved as a propeptide — removed in mature form; by autocatalysis. The active-site Nucleophile is Thr14.

It belongs to the peptidase T1B family. In terms of assembly, the 20S proteasome core is composed of 14 alpha and 14 beta subunits that assemble into four stacked heptameric rings, resulting in a barrel-shaped structure. The two inner rings, each composed of seven catalytic beta subunits, are sandwiched by two outer rings, each composed of seven alpha subunits. The catalytic chamber with the active sites is on the inside of the barrel. Has a gated structure, the ends of the cylinder being occluded by the N-termini of the alpha-subunits. Is capped at one or both ends by the proteasome regulatory ATPase, PAN.

It localises to the cytoplasm. The enzyme catalyses Cleavage of peptide bonds with very broad specificity.. Its activity is regulated as follows. The formation of the proteasomal ATPase PAN-20S proteasome complex, via the docking of the C-termini of PAN into the intersubunit pockets in the alpha-rings, triggers opening of the gate for substrate entry. Interconversion between the open-gate and close-gate conformations leads to a dynamic regulation of the 20S proteasome proteolysis activity. Component of the proteasome core, a large protease complex with broad specificity involved in protein degradation. The sequence is that of Proteasome subunit beta 2 from Sulfurisphaera tokodaii (strain DSM 16993 / JCM 10545 / NBRC 100140 / 7) (Sulfolobus tokodaii).